Here is a 321-residue protein sequence, read N- to C-terminus: Aspartate carbamoyltransferase catalytic subunit (321 aa).

Residues R64 and T65 each coordinate carbamoyl phosphate. L-aspartate is bound at residue K92. Carbamoyl phosphate is bound by residues R114, H142, and Q145. L-aspartate contacts are provided by R175 and R229. The carbamoyl phosphate site is built by G270 and P271.

It belongs to the aspartate/ornithine carbamoyltransferase superfamily. ATCase family. As to quaternary structure, heterododecamer (2C3:3R2) of six catalytic PyrB chains organized as two trimers (C3), and six regulatory PyrI chains organized as three dimers (R2).

The enzyme catalyses carbamoyl phosphate + L-aspartate = N-carbamoyl-L-aspartate + phosphate + H(+). The protein operates within pyrimidine metabolism; UMP biosynthesis via de novo pathway; (S)-dihydroorotate from bicarbonate: step 2/3. Catalyzes the condensation of carbamoyl phosphate and aspartate to form carbamoyl aspartate and inorganic phosphate, the committed step in the de novo pyrimidine nucleotide biosynthesis pathway. This is Aspartate carbamoyltransferase catalytic subunit from Azorhizobium caulinodans (strain ATCC 43989 / DSM 5975 / JCM 20966 / LMG 6465 / NBRC 14845 / NCIMB 13405 / ORS 571).